Here is a 330-residue protein sequence, read N- to C-terminus: Aspartate--ammonia ligase (330 aa).

The protein belongs to the class-II aminoacyl-tRNA synthetase family. AsnA subfamily.

The protein localises to the cytoplasm. The catalysed reaction is L-aspartate + NH4(+) + ATP = L-asparagine + AMP + diphosphate + H(+). Its pathway is amino-acid biosynthesis; L-asparagine biosynthesis; L-asparagine from L-aspartate (ammonia route): step 1/1. The chain is Aspartate--ammonia ligase from Glaesserella parasuis serovar 5 (strain SH0165) (Haemophilus parasuis).